The primary structure comprises 226 residues: ATP synthase F(0) complex subunit a (226 aa).

The next 6 helical transmembrane spans lie at 6 to 26, 68 to 88, 97 to 117, 138 to 158, 164 to 184, and 193 to 213; these read FAPF…IMIF, WTLM…LGLL, QLSM…LMGF, IPML…ALAV, ITAG…LSSI, and FTIL…QAYV.

Belongs to the ATPase A chain family. As to quaternary structure, component of the ATP synthase complex composed at least of ATP5F1A/subunit alpha, ATP5F1B/subunit beta, ATP5MC1/subunit c (homooctomer), MT-ATP6/subunit a, MT-ATP8/subunit 8, ATP5ME/subunit e, ATP5MF/subunit f, ATP5MG/subunit g, ATP5MK/subunit k, ATP5MJ/subunit j, ATP5F1C/subunit gamma, ATP5F1D/subunit delta, ATP5F1E/subunit epsilon, ATP5PF/subunit F6, ATP5PB/subunit b, ATP5PD/subunit d, ATP5PO/subunit OSCP. ATP synthase complex consists of a soluble F(1) head domain (subunits alpha(3) and beta(3)) - the catalytic core - and a membrane F(0) domain - the membrane proton channel (subunits c, a, 8, e, f, g, k and j). These two domains are linked by a central stalk (subunits gamma, delta, and epsilon) rotating inside the F1 region and a stationary peripheral stalk (subunits F6, b, d, and OSCP). Interacts with DNAJC30; interaction is direct.

The protein localises to the mitochondrion inner membrane. It carries out the reaction H(+)(in) = H(+)(out). Subunit a, of the mitochondrial membrane ATP synthase complex (F(1)F(0) ATP synthase or Complex V) that produces ATP from ADP in the presence of a proton gradient across the membrane which is generated by electron transport complexes of the respiratory chain. ATP synthase complex consist of a soluble F(1) head domain - the catalytic core - and a membrane F(1) domain - the membrane proton channel. These two domains are linked by a central stalk rotating inside the F(1) region and a stationary peripheral stalk. During catalysis, ATP synthesis in the catalytic domain of F(1) is coupled via a rotary mechanism of the central stalk subunits to proton translocation. With the subunit c (ATP5MC1), forms the proton-conducting channel in the F(0) domain, that contains two crucial half-channels (inlet and outlet) that facilitate proton movement from the mitochondrial intermembrane space (IMS) into the matrix. Protons are taken up via the inlet half-channel and released through the outlet half-channel, following a Grotthuss mechanism. The protein is ATP synthase F(0) complex subunit a of Ornithorhynchus anatinus (Duckbill platypus).